The following is a 225-amino-acid chain: Transmembrane protein C16orf54 homolog (225 aa).

A helical transmembrane segment spans residues 34-54; it reads IPIMLGLASLTAFFIITTAVL. Positions 107 to 149 are disordered; sequence RAPDPPTPGGTLEGRATAPPAIPTPHPSPSSLVPQTPPEVPAQ. T113 and T117 each carry phosphothreonine. The residue at position 195 (S195) is a Phosphoserine.

It is found in the membrane. The polypeptide is Transmembrane protein C16orf54 homolog (Rattus norvegicus (Rat)).